We begin with the raw amino-acid sequence, 587 residues long: Aspartate--tRNA ligase (587 aa).

E175 is an L-aspartate binding site. The interval 199–202 (QQFK) is aspartate. L-aspartate is bound by residues R221 and H446. ATP is bound at residue 221–223 (RDE). Residue E480 participates in ATP binding. Residue R487 participates in L-aspartate binding. Residue 532–535 (GVDR) participates in ATP binding.

The protein belongs to the class-II aminoacyl-tRNA synthetase family. Type 1 subfamily. Homodimer.

It is found in the cytoplasm. It carries out the reaction tRNA(Asp) + L-aspartate + ATP = L-aspartyl-tRNA(Asp) + AMP + diphosphate. In terms of biological role, catalyzes the attachment of L-aspartate to tRNA(Asp) in a two-step reaction: L-aspartate is first activated by ATP to form Asp-AMP and then transferred to the acceptor end of tRNA(Asp). This chain is Aspartate--tRNA ligase, found in Streptomyces avermitilis (strain ATCC 31267 / DSM 46492 / JCM 5070 / NBRC 14893 / NCIMB 12804 / NRRL 8165 / MA-4680).